The sequence spans 174 residues: Granulocyte colony-stimulating factor (174 aa).

Cystine bridges form between C36–C42 and C64–C74. T133 carries an O-linked (GalNAc...) threonine glycan.

The protein belongs to the IL-6 superfamily. In terms of assembly, monomer. O-glycosylated.

The protein localises to the secreted. Functionally, granulocyte/macrophage colony-stimulating factors are cytokines that act in hematopoiesis by controlling the production, differentiation, and function of 2 related white cell populations of the blood, the granulocytes and the monocytes-macrophages. This CSF induces granulocytes. The sequence is that of Granulocyte colony-stimulating factor (CSF3) from Ovis aries (Sheep).